Here is an 833-residue protein sequence, read N- to C-terminus: MPPPLRHRSMRIFVNDDRHVMAKHSAIYPTQEELEGVQNMVSHTERALKLVSDWLDDQEKGNAKVNALDTDGEGDKETEPSTGEQATRSLRGVMRVGLVAKGLLLKGDLDLELVLLCKEKPTITLLKKVSDNLAVQLKQLVTEEKYDVKPCIRDATIVIKNAKEPPLTLTIHLTSPLVREEVEKQAAGETLSVIDPPDVLDRQKCLTALASLRHAKWFQARANGLRSCVIVIRILRDLCARVPTWSPLRGWPLELLCEKAIGTGNRPMGAGEALRRVLECLASGILMADGSGICDPCEKELTDAISHVDRQQREDITQSAQHALRLSAFGQLHKVLGMDPLPSKMPRKPRSDTPIDYTVQIPPSTTYVPPMKRPIEEESTDEKNPNKKKKKLQKKSPDEKAEPAQAMNALMRLNQLKPGLQYKLISQTGPVHVPVFTMSVEVDGKNFEASGPSKRTAKLHVAVKVLQDMGLPTGMDQKTTELMKVDEPVSTQETLPPVIKMEPEPVPITETPTDENARQQGPILTKHGKNPVMELNEKRRGLKYELISETGGSHDKRFVMEVEIDGQKFQGTGSNKKVAKAYAALAALEKLFPEGSNSEVNKKKKMPPMHTGFGMVSGPPSDMMPNPRGRGRGRGRGRGRGFNNGGGFNQGGYGTYGYGGNNSGYNFYNNGGSNGGSVASNQGTNQSSGGAAATGGFGSYYQSDSSYTSPAPTPKPVGKKPPMHQNTKPQAPGVGQGGSYGQYNQGYGQKKNFGQTQGGGGAAAGGGGNFNYSTAYPSQVTGGQEYNYEGYSNQSNYNSQGGANQNFGGNSAPYNSGQAGYGRGDPNMNYQYR.

Residues 11–379 (RIFVNDDRHV…PMKRPIEEES (369 aa)) form the DZF domain. Disordered regions lie at residues 65–86 (VNAL…GEQA) and 339–403 (DPLP…KAEP). Residue T70 is modified to Phosphothreonine. Residues 373–385 (RPIEEESTDEKNP) show a composition bias toward basic and acidic residues. DRBM domains lie at 402-471 (EPAQ…DMGL) and 527-593 (HGKN…KLFP). 3 disordered regions span residues 597–651 (NSEV…FNQG), 702–762 (QSDS…GGGA), and 775–833 (AYPS…YQYR). The span at 629-639 (GRGRGRGRGRG) shows a compositional bias: basic residues. The segment covering 640 to 651 (RGFNNGGGFNQG) has biased composition (gly residues). Residues 775–818 (AYPSQVTGGQEYNYEGYSNQSNYNSQGGANQNFGGNSAPYNSGQ) are compositionally biased toward polar residues.

The protein localises to the nucleus. It localises to the nucleolus. Its subcellular location is the cytoplasm. Functionally, RNA-binding protein that plays an essential role in the biogenesis of circular RNAs (circRNAs) which are produced by back-splicing circularization of pre-mRNAs. Within the nucleus, promotes circRNAs processing by stabilizing the regulatory elements residing in the flanking introns of the circularized exons. Plays thereby a role in the back-splicing of a subset of circRNAs. As a consequence, participates in a wide range of transcriptional and post-transcriptional processes. Binds to poly-U elements and AU-rich elements (AREs) in the 3'-UTR of target mRNAs. Upon viral infection, ILF3 accumulates in the cytoplasm and participates in the innate antiviral response. Mechanistically, ILF3 becomes phosphorylated and activated by the double-stranded RNA-activated protein kinase/PKR which releases ILF3 from cellular mature circRNAs. In turn, unbound ILF3 molecules are able to interact with and thus inhibit viral mRNAs. The chain is Interleukin enhancer-binding factor 3 homolog (ilf3) from Danio rerio (Zebrafish).